The following is a 187-amino-acid chain: Ribosome-recycling factor (187 aa).

The protein belongs to the RRF family.

The protein resides in the cytoplasm. Its function is as follows. Responsible for the release of ribosomes from messenger RNA at the termination of protein biosynthesis. May increase the efficiency of translation by recycling ribosomes from one round of translation to another. The protein is Ribosome-recycling factor of Rhodopseudomonas palustris (strain BisB18).